A 293-amino-acid polypeptide reads, in one-letter code: Elongation factor Ts (293 aa).

Residues 80–83 are involved in Mg(2+) ion dislocation from EF-Tu; it reads TDFV.

This sequence belongs to the EF-Ts family.

Its subcellular location is the cytoplasm. Associates with the EF-Tu.GDP complex and induces the exchange of GDP to GTP. It remains bound to the aminoacyl-tRNA.EF-Tu.GTP complex up to the GTP hydrolysis stage on the ribosome. The protein is Elongation factor Ts of Janthinobacterium sp. (strain Marseille) (Minibacterium massiliensis).